We begin with the raw amino-acid sequence, 619 residues long: P-granule-associated protein deps-1 (619 aa).

The interval 62-101 (NFDNIEEAKNLERRSKIPLKFGEVILWNESDCDHDKRIIL) is required for prg-1 binding. 2 stretches are compositionally biased toward low complexity: residues 563–592 (SRAT…AATS) and 600–619 (GPSS…SSRV). The interval 563–619 (SRATSARTTPAGSSIGSRSSIQSRASAATSVSSNRFVGPSSRRTPSGTPQSSTSSRV) is disordered.

In terms of assembly, interacts (via N-terminus) with prg-1; the interaction is direct. May interact with edg-1. In terms of tissue distribution, expressed in germ cells.

The protein localises to the cytoplasmic granule. It is found in the cytoplasm. Its subcellular location is the perinuclear region. Its function is as follows. Component of P-granules which is required for P-granule formation and integrity in adult germ cells. Promotes the accumulation of glh-1 mRNA and localization of pgl-1 to P-granules. Involved in RNA-mediated gene silencing (RNAi) in the germline. In particular, it is required for piwi-interacting RNA (piRNA) gene silencing and positively regulates the formation of secondary 22G-RNAs, which are RNA-dependent RNA polymerase-derived endo-siRNAs, typically 22 nucleotides in length with a 5'guanosine residue. Its role in RNAi may also be through positively regulating the expression of the dsRNA-binding protein rde-4. Plays a role in small RNA-directed transgenerational epigenetic inheritance. This Caenorhabditis elegans protein is P-granule-associated protein deps-1.